A 652-amino-acid chain; its full sequence is Nitrate reductase-like protein NarX (652 aa).

A nitrate reductase alpha subunit region spans residues 1–251 (MTVTPRTGSR…FGDQTDVPES (251 aa)). Residues 53-117 (DKVVRSTHGV…AFSWYTYSPT (65 aa)) form the 4Fe-4S Mo/W bis-MGD-type domain. Residues H60, C64, C68, and C103 each coordinate [4Fe-4S] cluster. D233 lines the Mo-bis(molybdopterin guanine dinucleotide) pocket. Residues 258-415 (VWQCASVLLT…TVAAVCRTGD (158 aa)) form a nitrate reductase delta subunit region. The next 5 membrane-spanning stretches (helical) occupy residues 416–436 (MMGE…VAVG), 466–486 (PMFH…LVIP), 504–524 (AVVL…LLIY), 545–565 (LVLV…SGVV), and 595–615 (APLY…LWPF). The segment at 416–652 (MMGELFWTVV…VLTRPRRRGW (237 aa)) is nitrate reductase gamma subunit. Residues H469 and H479 each contribute to the heme b site. The heme b site is built by H602 and H620.

The protein in the N-terminal section; belongs to the nitrate reductase alpha subunit family. It in the central section; belongs to the NarJ/NarW family. In the C-terminal section; belongs to the nitrate reductase gamma subunit family. [4Fe-4S] cluster serves as cofactor. Requires Mo-bis(molybdopterin guanine dinucleotide) as cofactor. Heme b is required as a cofactor.

The protein localises to the cell membrane. In terms of biological role, does not seem to have nitrate reductase activity. In Mycobacterium tuberculosis (strain CDC 1551 / Oshkosh), this protein is Nitrate reductase-like protein NarX (narX).